A 78-amino-acid polypeptide reads, in one-letter code: Large ribosomal subunit protein bL31 (78 aa).

This sequence belongs to the bacterial ribosomal protein bL31 family. Type A subfamily. As to quaternary structure, part of the 50S ribosomal subunit.

Functionally, binds the 23S rRNA. This Rickettsia conorii (strain ATCC VR-613 / Malish 7) protein is Large ribosomal subunit protein bL31 (rpmE).